Consider the following 110-residue polypeptide: MSETRAVLRGVRLSVDKGRLVADLIRGKKVDQALNVLQFTQKKAAVIIKKVLESAIANAEHNDGADIDELKVKTIYVEQGATLKRFTARAKGRGNRISKPTCHVYVTVGN.

The protein belongs to the universal ribosomal protein uL22 family. Part of the 50S ribosomal subunit.

Its function is as follows. This protein binds specifically to 23S rRNA; its binding is stimulated by other ribosomal proteins, e.g. L4, L17, and L20. It is important during the early stages of 50S assembly. It makes multiple contacts with different domains of the 23S rRNA in the assembled 50S subunit and ribosome. Functionally, the globular domain of the protein is located near the polypeptide exit tunnel on the outside of the subunit, while an extended beta-hairpin is found that lines the wall of the exit tunnel in the center of the 70S ribosome. This chain is Large ribosomal subunit protein uL22, found in Variovorax paradoxus (strain S110).